The primary structure comprises 244 residues: Putative B3 domain-containing protein At2g31460 (244 aa).

The TF-B3 DNA-binding region spans 49 to 147 (SSMHMENSGF…PVHDGVNLSG (99 aa)). Disordered stretches follow at residues 175–196 (DGNLPQDSGHDGHNDNLPQDSV) and 217–244 (DSQGYLPDEDEDFGFNDDGSIRDSGHYQ). Residues 235 to 244 (GSIRDSGHYQ) show a composition bias toward basic and acidic residues.

It localises to the nucleus. This chain is Putative B3 domain-containing protein At2g31460, found in Arabidopsis thaliana (Mouse-ear cress).